The sequence spans 215 residues: E3 ubiquitin-protein ligase NleG (215 aa).

The RING/U-box domain stretch occupies residues 136–189 (CPITLCIPETGVFVRNAKNSEICSLYDHNALTELIRRNAPHPLSREPFVPEMIV). Positions 213–215 (TRI) match the PDZ-binding motif motif.

Belongs to the NleG E3 ligase family. As to quaternary structure, interacts with host GOPC (human protein). Post-translationally, two sizes of protein are detected upon expression in C.rodentium; only the smaller protein is secreted.

It localises to the secreted. The protein localises to the host cytoplasm. It carries out the reaction S-ubiquitinyl-[E2 ubiquitin-conjugating enzyme]-L-cysteine + [acceptor protein]-L-lysine = [E2 ubiquitin-conjugating enzyme]-L-cysteine + N(6)-ubiquitinyl-[acceptor protein]-L-lysine.. In terms of biological role, effector proteins function to alter host cell physiology and promote bacterial survival in host tissues. This protein is an E3 ubiquitin-protein ligase that probably interferes with the host's ubiquitination pathway and targets host proteins for proteasomal degradation. Can ubiquitinate ubiquitin, giving rise to polyubiquitin chains (in vitro). Does not complement an nleG8 deletion in C.rodentium. The protein is E3 ubiquitin-protein ligase NleG of Escherichia coli O157:H7.